A 474-amino-acid chain; its full sequence is Glutamine synthetase (474 aa).

Residues 14–99 form the GS beta-grasp domain; that stretch reads EKIELIDLKF…VCSIKEPRTG (86 aa). In terms of domain architecture, GS catalytic spans 106–474; it reads PRVIAQKAID…PYEFSIYYDV (369 aa). Positions 131 and 133 each coordinate Mg(2+). Residue glutamate 211 participates in ATP binding. Mg(2+) contacts are provided by glutamate 216 and glutamate 224. Residues 268–269 and glycine 269 contribute to the L-glutamate site; that span reads NG. A Mg(2+)-binding site is contributed by histidine 273. Residues 275-277 and serine 277 contribute to the ATP site; that span reads HQS. Arginine 325, glutamate 331, and arginine 343 together coordinate L-glutamate. Arginine 343, arginine 348, and lysine 357 together coordinate ATP. Glutamate 362 contributes to the Mg(2+) binding site. An L-glutamate-binding site is contributed by arginine 364. At tyrosine 402 the chain carries O-AMP-tyrosine.

It belongs to the glutamine synthetase family. In terms of assembly, oligomer of 12 subunits arranged in the form of two hexagons. It depends on Mg(2+) as a cofactor.

It localises to the cytoplasm. It carries out the reaction L-glutamate + NH4(+) + ATP = L-glutamine + ADP + phosphate + H(+). The activity of this enzyme could be controlled by adenylation under conditions of abundant glutamine. In terms of biological role, involved in nitrogen metabolism via ammonium assimilation. Catalyzes the ATP-dependent biosynthesis of glutamine from glutamate and ammonia. The protein is Glutamine synthetase of Nostoc sp. (strain PCC 7120 / SAG 25.82 / UTEX 2576).